Here is a 258-residue protein sequence, read N- to C-terminus: Deoxyribose-phosphate aldolase (258 aa).

The active-site Proton donor/acceptor is the aspartate 101. Catalysis depends on lysine 166, which acts as the Schiff-base intermediate with acetaldehyde. Lysine 200 functions as the Proton donor/acceptor in the catalytic mechanism.

The protein belongs to the DeoC/FbaB aldolase family. DeoC type 2 subfamily.

The protein localises to the cytoplasm. The catalysed reaction is 2-deoxy-D-ribose 5-phosphate = D-glyceraldehyde 3-phosphate + acetaldehyde. The protein operates within carbohydrate degradation; 2-deoxy-D-ribose 1-phosphate degradation; D-glyceraldehyde 3-phosphate and acetaldehyde from 2-deoxy-alpha-D-ribose 1-phosphate: step 2/2. Catalyzes a reversible aldol reaction between acetaldehyde and D-glyceraldehyde 3-phosphate to generate 2-deoxy-D-ribose 5-phosphate. This is Deoxyribose-phosphate aldolase from Actinobacillus pleuropneumoniae serotype 5b (strain L20).